Consider the following 596-residue polypeptide: DNA polymerase kappa (596 aa).

The UmuC domain occupies 85–320 (CVCIDMDAYF…LPIRKVGGIG (236 aa)). Positions 89 and 180 each coordinate Mg(2+). Glu181 is an active-site residue. The UBZ4-type zinc finger occupies 516 to 545 (TRPCPICGTDVENRLDVMNCHVDECILKVQ). Residues Cys519, Cys522, His536, and Cys540 each contribute to the Zn(2+) site. The tract at residues 559-584 (NKSTQKPERPSTKKRKLQEKRPKAKK) is disordered. Residues 570-584 (TKKRKLQEKRPKAKK) are compositionally biased toward basic residues.

Belongs to the DNA polymerase type-Y family. It depends on Mg(2+) as a cofactor. Mn(2+) is required as a cofactor.

The protein localises to the nucleus. It catalyses the reaction DNA(n) + a 2'-deoxyribonucleoside 5'-triphosphate = DNA(n+1) + diphosphate. Its function is as follows. DNA polymerase specifically involved in DNA repair. Plays an important role in translesion synthesis, where the normal high-fidelity DNA polymerases cannot proceed and DNA synthesis stalls. Depending on the context, it inserts the correct base, but causes frequent base transitions, transversions and frameshifts. Lacks 3'-5' proofreading exonuclease activity. Forms a Schiff base with 5'-deoxyribose phosphate at abasic sites, but does not have lyase activity. The protein is DNA polymerase kappa (polk-1) of Caenorhabditis elegans.